The primary structure comprises 277 residues: Alpha carbonic anhydrase 5 (277 aa).

Residues 1-22 (MKIPSIGYVFFLIFISITIVSS) form the signal peptide. The 237-residue stretch at 33-269 (TQFNYEKKGE…KNERPVALYI (237 aa)) folds into the Alpha-carbonic anhydrase domain. Cysteines 58 and 219 form a disulfide. Asn-91 carries an N-linked (GlcNAc...) asparagine glycan. The active-site Proton acceptor is His-99. Residue Asn-117 is glycosylated (N-linked (GlcNAc...) asparagine). Zn(2+)-binding residues include His-127, His-129, and His-146. Residue 215–216 (TT) participates in substrate binding.

The protein belongs to the alpha-class carbonic anhydrase family. Zn(2+) is required as a cofactor. In terms of processing, N-glycosylated.

The protein resides in the plastid. Its subcellular location is the chloroplast stroma. The catalysed reaction is hydrogencarbonate + H(+) = CO2 + H2O. Its function is as follows. Reversible hydration of carbon dioxide. The polypeptide is Alpha carbonic anhydrase 5 (ACA5) (Arabidopsis thaliana (Mouse-ear cress)).